The chain runs to 1175 residues: DNA ligase 3 (1175 aa).

The segment at 195 to 243 (HDFDNDNGDGDDGDGDDNDDDDGDGDSDSDKKKKKSSGGSGSDSGSKKK) is disordered. Residues 199 to 221 (NDNGDGDDGDGDDNDDDDGDGDS) show a composition bias toward acidic residues. An ATP-binding site is contributed by Glu281. Lys283 functions as the N6-AMP-lysine intermediate in the catalytic mechanism. Residues Arg288 and Arg303 each contribute to the ATP site. Mg(2+) contacts are provided by Glu334 and Glu432. Lys437, Arg448, and Lys452 together coordinate ATP. 2 disordered regions span residues 612–669 (PVGK…LKFV) and 829–869 (KSSP…KRGR). Low complexity-rich tracts occupy residues 622–635 (TTTTTTTTTTTTTT) and 829–859 (KSSPTTTSPTTTSPTTTSPKITSPSSSSSPS). Positions 883 to 976 (PSLPIFEDVN…KLLPLHEDYI (94 aa)) constitute a BRCT 1 domain. The disordered stretch occupies residues 984–1036 (PDYSQSSSSSSMSIEEEKIVVTTTSDDPSEGNQQQQDKKVIKESKIIQSKDHS). Over residues 987–996 (SQSSSSSSMS) the composition is skewed to low complexity. Polar residues predominate over residues 1004–1018 (VTTTSDDPSEGNQQQ). The span at 1019-1036 (QDKKVIKESKIIQSKDHS) shows a compositional bias: basic and acidic residues. The BRCT 2 domain occupies 1067-1174 (HLLSIFQECI…DLLDVKNYKL (108 aa)).

Belongs to the ATP-dependent DNA ligase family. Mg(2+) is required as a cofactor.

It is found in the nucleus. It catalyses the reaction ATP + (deoxyribonucleotide)n-3'-hydroxyl + 5'-phospho-(deoxyribonucleotide)m = (deoxyribonucleotide)n+m + AMP + diphosphate.. Its function is as follows. The alpha isoform interacts with DNA-repair protein XRCC1 and can correct defective DNA strand-break repair and sister chromatid exchange following treatment with ionizing radiation and alkylating agents. The beta isoform does not interact with XRCC1 and may be specifically involved in the completion of homologous recombination events that occur during meiotic prophase. In Dictyostelium discoideum (Social amoeba), this protein is DNA ligase 3 (lig3).